The primary structure comprises 143 residues: Class I hydrophobin 20 (143 aa).

Positions 1-22 are cleaved as a signal peptide; it reads MLSHPMKLLFFVFALSALLAAA. Intrachain disulfides connect Cys54–Cys123, Cys62–Cys117, Cys63–Cys102, and Cys124–Cys137.

It belongs to the fungal hydrophobin family. In terms of assembly, self-assembles to form functional amyloid fibrils called rodlets. Self-assembly into fibrillar rodlets occurs spontaneously at hydrophobic:hydrophilic interfaces and the rodlets further associate laterally to form amphipathic monolayers.

It localises to the secreted. The protein resides in the cell wall. Aerial growth, conidiation, and dispersal of filamentous fungi in the environment rely upon a capability of their secreting small amphipathic proteins called hydrophobins (HPBs) with low sequence identity. Class I can self-assemble into an outermost layer of rodlet bundles on aerial cell surfaces, conferring cellular hydrophobicity that supports fungal growth, development and dispersal; whereas Class II form highly ordered films at water-air interfaces through intermolecular interactions but contribute nothing to the rodlet structure. Hydph20 is a class I hydrophobin involved in mycelial growth. The chain is Class I hydrophobin 20 from Pleurotus ostreatus (strain PC15) (Oyster mushroom).